A 343-amino-acid polypeptide reads, in one-letter code: Selenide, water dikinase (343 aa).

The active site involves Sec15. Residue Sec15 is a non-standard amino acid, selenocysteine. Residues Lys18 and 45-47 (TAD) contribute to the ATP site. Position 48 (Asp48) interacts with Mg(2+). ATP is bound by residues Asp65, Asp88, and 135–137 (GHT). Asp88 is a binding site for Mg(2+). Asp223 serves as a coordination point for Mg(2+).

It belongs to the selenophosphate synthase 1 family. Class I subfamily. In terms of assembly, homodimer. Requires Mg(2+) as cofactor.

It carries out the reaction hydrogenselenide + ATP + H2O = selenophosphate + AMP + phosphate + 2 H(+). Its function is as follows. Synthesizes selenophosphate from selenide and ATP. The protein is Selenide, water dikinase of Carboxydothermus hydrogenoformans (strain ATCC BAA-161 / DSM 6008 / Z-2901).